Reading from the N-terminus, the 245-residue chain is Ubiquinone/menaquinone biosynthesis C-methyltransferase UbiE (245 aa).

Residues threonine 71, aspartate 92, and 118–119 contribute to the S-adenosyl-L-methionine site; that span reads DA.

This sequence belongs to the class I-like SAM-binding methyltransferase superfamily. MenG/UbiE family.

It catalyses the reaction a 2-demethylmenaquinol + S-adenosyl-L-methionine = a menaquinol + S-adenosyl-L-homocysteine + H(+). The catalysed reaction is a 2-methoxy-6-(all-trans-polyprenyl)benzene-1,4-diol + S-adenosyl-L-methionine = a 5-methoxy-2-methyl-3-(all-trans-polyprenyl)benzene-1,4-diol + S-adenosyl-L-homocysteine + H(+). The protein operates within quinol/quinone metabolism; menaquinone biosynthesis; menaquinol from 1,4-dihydroxy-2-naphthoate: step 2/2. Its pathway is cofactor biosynthesis; ubiquinone biosynthesis. Functionally, methyltransferase required for the conversion of demethylmenaquinol (DMKH2) to menaquinol (MKH2) and the conversion of 2-polyprenyl-6-methoxy-1,4-benzoquinol (DDMQH2) to 2-polyprenyl-3-methyl-6-methoxy-1,4-benzoquinol (DMQH2). The polypeptide is Ubiquinone/menaquinone biosynthesis C-methyltransferase UbiE (Neisseria meningitidis serogroup C / serotype 2a (strain ATCC 700532 / DSM 15464 / FAM18)).